The sequence spans 64 residues: Large ribosomal subunit protein bL35 (64 aa).

It belongs to the bacterial ribosomal protein bL35 family.

The polypeptide is Large ribosomal subunit protein bL35 (Ureaplasma urealyticum serovar 10 (strain ATCC 33699 / Western)).